We begin with the raw amino-acid sequence, 117 residues long: Immunoglobulin lambda variable 7-46 (117 aa).

The N-terminal stretch at 1–19 (MAWTPLFLFLLTCCPGSNS) is a signal peptide. The interval 20–44 (QAVVTQEPSLTVSPGGTVTLTCGSS) is framework-1. The Ig-like domain maps to 20-117 (QAVVTQEPSL…YCLLSYSGAR (98 aa)). C41 and C109 are joined by a disulfide. The complementarity-determining-1 stretch occupies residues 45 to 53 (TGAVTSGHY). Residues 54-70 (PYWFQQKPGQAPRTLIY) form a framework-2 region. The segment at 71–73 (DTS) is complementarity-determining-2. The segment at 74–109 (NKHSWTPARFSGSLLGGKAALTLLGAQPEDEAEYYC) is framework-3. The segment at 110 to 117 (LLSYSGAR) is complementarity-determining-3.

Immunoglobulins are composed of two identical heavy chains and two identical light chains; disulfide-linked.

The protein resides in the secreted. It localises to the cell membrane. V region of the variable domain of immunoglobulin light chains that participates in the antigen recognition. Immunoglobulins, also known as antibodies, are membrane-bound or secreted glycoproteins produced by B lymphocytes. In the recognition phase of humoral immunity, the membrane-bound immunoglobulins serve as receptors which, upon binding of a specific antigen, trigger the clonal expansion and differentiation of B lymphocytes into immunoglobulins-secreting plasma cells. Secreted immunoglobulins mediate the effector phase of humoral immunity, which results in the elimination of bound antigens. The antigen binding site is formed by the variable domain of one heavy chain, together with that of its associated light chain. Thus, each immunoglobulin has two antigen binding sites with remarkable affinity for a particular antigen. The variable domains are assembled by a process called V-(D)-J rearrangement and can then be subjected to somatic hypermutations which, after exposure to antigen and selection, allow affinity maturation for a particular antigen. In Homo sapiens (Human), this protein is Immunoglobulin lambda variable 7-46.